A 1905-amino-acid chain; its full sequence is Bromodomain adjacent to zinc finger domain protein 2A (1905 aa).

Disordered regions lie at residues 1 to 59 (MEME…NGLS) and 362 to 434 (TSIF…PTTS). Polar residues-rich tracts occupy residues 35–59 (TNGS…NGLS), 379–391 (LQDN…NGSD), and 399–420 (TQSS…STIQ). Threonine 507 is modified (phosphothreonine). At serine 509 the chain carries Phosphoserine. Residues 546–617 (IATPEEVRLP…EHFSFSPRMP (72 aa)) form the MBD domain. Threonine 548 carries the post-translational modification Phosphothreonine. Serine 613 is subject to Phosphoserine. The disordered stretch occupies residues 648-792 (ITGKRGRPRN…KEKEEVTKAK (145 aa)). DNA-binding regions (a.T hook) lie at residues 649 to 661 (TGKR…TEKA) and 670 to 682 (KRGR…VKIT). Basic and acidic residues predominate over residues 656-668 (RNTEKAKTKEVPK). Positions 669 to 678 (VKRGRGRPPK) are enriched in basic residues. At lysine 680 the chain carries N6-acetyllysine; by KAT8. The segment covering 686–709 (NKTDNRPLKKLEAQETLNEEDKAK) has biased composition (basic and acidic residues). A coiled-coil region spans residues 693–792 (LKKLEAQETL…KEKEEVTKAK (100 aa)). Over residues 710–721 (IAKSKKKMRQKV) the composition is skewed to basic residues. Residues 725-734 (ECQTTIQGQA) are compositionally biased toward polar residues. Basic and acidic residues-rich tracts occupy residues 739 to 748 (KQETKSLKQK) and 756 to 792 (AEKE…TKAK). Lysine 799 is modified (N6-acetyllysine). Residues 848–913 (SGAFSDCLTI…LKAALHDPGF (66 aa)) form the DDT domain. A Glycyl lysine isopeptide (Lys-Gly) (interchain with G-Cter in SUMO2) cross-link involves residue lysine 866. A Phosphoserine modification is found at serine 1051. Glycyl lysine isopeptide (Lys-Gly) (interchain with G-Cter in SUMO2) cross-links involve residues lysine 1150 and lysine 1172. Disordered regions lie at residues 1178–1220 (SNTT…PQAQ), 1283–1318 (LSSS…SSPD), and 1330–1412 (MPCN…RPPS). Position 1184 is a phosphoserine (serine 1184). Positions 1186–1198 (ARARGRPRKTKPG) form a DNA-binding region, a.T hook 3. The segment covering 1283–1293 (LSSSVLTPDSS) has biased composition (low complexity). A compositionally biased stretch (acidic residues) spans 1306 to 1315 (EEPEPDEAES). Over residues 1345–1359 (DQPTPSPQQLASSKP) the composition is skewed to polar residues. A Phosphoserine modification is found at serine 1397. Residues 1404–1416 (PKRRGRPPSKFFK) constitute a DNA-binding region (a.T hook 4). The residue at position 1559 (serine 1559) is a Phosphoserine. Glycyl lysine isopeptide (Lys-Gly) (interchain with G-Cter in SUMO2) cross-links involve residues lysine 1676 and lysine 1709. Residues 1676–1726 (KVTCLVCRKGDNDEFLLLCDGCDRGCHIYCHRPKMEAVPEGDWFCTVCLAQ) form a PHD-type zinc finger. Disordered regions lie at residues 1734–1755 (QKPG…NFSE) and 1769–1789 (ESPA…KRRR). Phosphoserine is present on residues serine 1747, serine 1770, serine 1783, and serine 1785. The Bromo domain occupies 1793-1897 (RNHHSDLTFC…RFFESRWEEF (105 aa)).

Belongs to the WAL family. In terms of assembly, component of the NoRC-1 ISWI chromatin remodeling complex at least composed of SMARCA1 and BAZ2A/TIP5, which regulates the spacing of histone octamers on the DNA template to facilitate access to DNA. Within the NoRC-1 ISWI chromatin remodeling complex interacts with SMARCA1; the interaction is direct. Component of the NoRC-5 ISWI chromatin remodeling complex (also called the NoRC nucleolar-remodeling complex), at least composed of SMARCA5/SNF2H and BAZ2A/TIP5, which regulates the spacing of histone octamers on the DNA template to facilitate access to DNA. Within the NoRC-5 ISWI chromatin remodeling complexes interacts with SMARCA5/SNF2H; the interaction is direct. Interacts with TTF1; the interaction is required for recruitment of the NoRC-5 ISWI chromatin remodeling complex to rDNA. Interacts with HDAC1. Interacts with SIN3A. Interacts with DNMT1 and DNM3B. Interacts with BEND3 and USP21. Post-translationally, acetylation at Lys-680 by KAT8/MOF promotes its dissociation from pRNA, affecting heterochromatin formation, nucleosome positioning and rDNA silencing. Deacetylation by SIRT1 in late S phase enhances pRNA-binding, allowing de novo DNA methylation and heterochromatin formation. Acetylation is high during S phase and declines to background levels in late S phase when the silent copies of rRNA genes are replicated. In terms of processing, ubiquitinated. Deubiquitinated by USP21 leading to its stabilization. In terms of tissue distribution, expressed at moderate levels in most tissues analyzed, including heart, brain, placenta, lung, skeletal muscle, kidney and pancreas.

Its subcellular location is the nucleus. The protein resides in the nucleolus. Functionally, regulatory subunit of the ATP-dependent NoRC-1 and NoRC-5 ISWI chromatin remodeling complexes, which form ordered nucleosome arrays on chromatin and facilitate access to DNA during DNA-templated processes such as DNA replication, transcription, and repair. Both complexes regulate the spacing of nucleosomes along the chromatin and have the ability to slide mononucleosomes to the center of a DNA template. Directly stimulates the ATPase activity of SMARCA5 in the NoRC-5 ISWI chromatin remodeling complex. The NoRC-1 ISWI chromatin remodeling complex has a lower ATP hydrolysis rate than the NoRC-5 ISWI chromatin remodeling complex. Within the NoRC-5 ISWI chromatin remodeling complex, mediates silencing of a fraction of rDNA by recruiting histone-modifying enzymes and DNA methyltransferases, leading to heterochromatin formation and transcriptional silencing. In the complex, it plays a central role by being recruited to rDNA and by targeting chromatin modifying enzymes such as HDAC1, leading to repress RNA polymerase I transcription. Recruited to rDNA via its interaction with TTF1 and its ability to recognize and bind histone H4 acetylated on 'Lys-16' (H4K16ac), leading to deacetylation of H4K5ac, H4K8ac, H4K12ac but not H4K16ac. Specifically binds pRNAs, 150-250 nucleotide RNAs that are complementary in sequence to the rDNA promoter; pRNA-binding is required for heterochromatin formation and rDNA silencing. The sequence is that of Bromodomain adjacent to zinc finger domain protein 2A (BAZ2A) from Homo sapiens (Human).